A 396-amino-acid polypeptide reads, in one-letter code: Phosphoglycerate kinase (396 aa).

Substrate is bound by residues 21-23, arginine 36, 59-62, arginine 118, and arginine 151; these read DFN and HFDR. Residues lysine 201, glutamate 323, and 353 to 356 contribute to the ATP site; that span reads GGDT.

Belongs to the phosphoglycerate kinase family. As to quaternary structure, monomer.

The protein resides in the cytoplasm. It catalyses the reaction (2R)-3-phosphoglycerate + ATP = (2R)-3-phospho-glyceroyl phosphate + ADP. It participates in carbohydrate degradation; glycolysis; pyruvate from D-glyceraldehyde 3-phosphate: step 2/5. The protein is Phosphoglycerate kinase of Caulobacter vibrioides (strain ATCC 19089 / CIP 103742 / CB 15) (Caulobacter crescentus).